A 278-amino-acid chain; its full sequence is OX-2 membrane glycoprotein (278 aa).

The signal sequence occupies residues 1–30 (MGSPVFRRPFCHLSTYSLLWAIAAVALSTA). An Ig-like V-type domain is found at 31 to 141 (QVEVVTQDER…SGTACLTLYV (111 aa)). The Extracellular portion of the chain corresponds to 31–232 (QVEVVTQDER…IDYKQSLDKG (202 aa)). Cystine bridges form between C51/C121 and C118/C136. Residues N95, N103, and N110 are each glycosylated (N-linked (GlcNAc...) asparagine). One can recognise an Ig-like C2-type domain in the interval 142–232 (QPIVHLHYNY…IDYKQSLDKG (91 aa)). N157, N181, and N190 each carry an N-linked (GlcNAc...) asparagine glycan. C160 and C214 are joined by a disulfide. A helical membrane pass occupies residues 233 to 259 (FWFSVPLLLSIVSLVILLVLISILLYW). The Cytoplasmic segment spans residues 260–278 (KRHRNQERGESSQGMQRMK).

In terms of assembly, CD200 and CD200R1 interact via their respective N-terminal Ig-like domains. In terms of tissue distribution, found on the surface of neurons, thymocytes, B-cells and follicular dendritic cells.

Its subcellular location is the cell membrane. Functionally, costimulates T-cell proliferation. May regulate myeloid cell activity in a variety of tissues. This Rattus norvegicus (Rat) protein is OX-2 membrane glycoprotein (Cd200).